The following is a 217-amino-acid chain: Probable transaldolase (217 aa).

Lys-83 functions as the Schiff-base intermediate with substrate in the catalytic mechanism.

Belongs to the transaldolase family. Type 3B subfamily.

Its subcellular location is the cytoplasm. The enzyme catalyses D-sedoheptulose 7-phosphate + D-glyceraldehyde 3-phosphate = D-erythrose 4-phosphate + beta-D-fructose 6-phosphate. It functions in the pathway carbohydrate degradation; pentose phosphate pathway; D-glyceraldehyde 3-phosphate and beta-D-fructose 6-phosphate from D-ribose 5-phosphate and D-xylulose 5-phosphate (non-oxidative stage): step 2/3. Functionally, transaldolase is important for the balance of metabolites in the pentose-phosphate pathway. The chain is Probable transaldolase from Maricaulis maris (strain MCS10) (Caulobacter maris).